A 416-amino-acid chain; its full sequence is D-amino acid dehydrogenase (416 aa).

3-17 (VVILGAGVIGVTSAW) contacts FAD.

The protein belongs to the DadA oxidoreductase family. FAD serves as cofactor.

It catalyses the reaction a D-alpha-amino acid + A + H2O = a 2-oxocarboxylate + AH2 + NH4(+). Its pathway is amino-acid degradation; D-alanine degradation; NH(3) and pyruvate from D-alanine: step 1/1. Oxidative deamination of D-amino acids. In Rhizorhabdus wittichii (strain DSM 6014 / CCUG 31198 / JCM 15750 / NBRC 105917 / EY 4224 / RW1) (Sphingomonas wittichii), this protein is D-amino acid dehydrogenase.